A 753-amino-acid chain; its full sequence is 5-methyltetrahydropteroyltriglutamate--homocysteine methyltransferase (753 aa).

Residues 17-20 (RELK) and K117 contribute to the 5-methyltetrahydropteroyltri-L-glutamate site. L-homocysteine-binding positions include 431-433 (IGS) and E484. Residues 431-433 (IGS) and E484 each bind L-methionine. 5-methyltetrahydropteroyltri-L-glutamate-binding positions include 515–516 (RC) and W561. D599 provides a ligand contact to L-homocysteine. D599 lines the L-methionine pocket. Residue E605 participates in 5-methyltetrahydropteroyltri-L-glutamate binding. H641, C643, and E665 together coordinate Zn(2+). H694 functions as the Proton donor in the catalytic mechanism. C726 serves as a coordination point for Zn(2+).

It belongs to the vitamin-B12 independent methionine synthase family. Zn(2+) is required as a cofactor.

The catalysed reaction is 5-methyltetrahydropteroyltri-L-glutamate + L-homocysteine = tetrahydropteroyltri-L-glutamate + L-methionine. It participates in amino-acid biosynthesis; L-methionine biosynthesis via de novo pathway; L-methionine from L-homocysteine (MetE route): step 1/1. Its function is as follows. Catalyzes the transfer of a methyl group from 5-methyltetrahydrofolate to homocysteine resulting in methionine formation. This chain is 5-methyltetrahydropteroyltriglutamate--homocysteine methyltransferase, found in Escherichia coli O157:H7 (strain EC4115 / EHEC).